We begin with the raw amino-acid sequence, 946 residues long: Protocadherin alpha-10 (946 aa).

Positions 1–30 are cleaved as a signal peptide; sequence MSCVAMKYCHESWCLLLSLLLFAIWEPGSG. Cadherin domains are found at residues 31 to 134, 135 to 243, 244 to 351, 352 to 456, 457 to 566, and 582 to 679; these read QLRY…PPVF, PTTE…APAF, DRAI…APKI, IVTS…APAF, AQSE…APTL, and VPRS…APKA. At 31–697 the chain is on the extracellular side; it reads QLRYSVPEEA…ASESSVVDVN (667 aa). Asparagine 258 carries an N-linked (GlcNAc...) asparagine glycan. A glycan (N-linked (GlcNAc...) asparagine) is linked at asparagine 549. The chain crosses the membrane as a helical span at residues 698-718; the sequence is VYLIIAICAVSSLLVLTLVLY. Topologically, residues 719 to 946 are cytoplasmic; it reads TALRCSALPT…GNSTTDNSDQ (228 aa). PXXP repeat units follow at residues 734–737, 774–777, 795–798, 828–831, 869–872, and 887–890; these read PGKP, PSVP, PRQP, PGGP, PGNP, and PGSP. The interval 734 to 890 is 6 X 4 AA repeats of P-X-X-P; that stretch reads PGKPMLVCSS…PDKFIIPGSP (157 aa). 2 disordered regions span residues 826 to 852 and 865 to 946; these read AGPG…EVSP and FKYG…NSDQ. Residues 905–919 show a composition bias toward basic and acidic residues; it reads DKSDFITFGKKEETK.

It localises to the cell membrane. Potential calcium-dependent cell-adhesion protein. May be involved in the establishment and maintenance of specific neuronal connections in the brain. The polypeptide is Protocadherin alpha-10 (Mus musculus (Mouse)).